The primary structure comprises 225 residues: Uridylate kinase (225 aa).

Residue 9–10 (GS) coordinates ATP. Gly46 is a UMP binding site. ATP-binding residues include Gly47 and Arg51. Residues Asp67 and 115-121 (THPAHTT) contribute to the UMP site. ATP-binding residues include Thr141, Asn142, Tyr147, and Asp150.

Belongs to the UMP kinase family. In terms of assembly, homohexamer.

It localises to the cytoplasm. It catalyses the reaction UMP + ATP = UDP + ADP. The protein operates within pyrimidine metabolism; CTP biosynthesis via de novo pathway; UDP from UMP (UMPK route): step 1/1. Inhibited by UTP. Functionally, catalyzes the reversible phosphorylation of UMP to UDP. The sequence is that of Uridylate kinase from Methanococcus vannielii (strain ATCC 35089 / DSM 1224 / JCM 13029 / OCM 148 / SB).